Here is a 543-residue protein sequence, read N- to C-terminus: ADP,ATP carrier protein 3 (543 aa).

10 helical membrane-spanning segments follow: residues 46-66, 86-106, 111-131, 175-195, 209-229, 243-263, 306-326, 346-366, 382-402, and 504-524; these read VLYLSLLFGVITMVHTIMGNL, IFLPPCSLLFIWAIQLGLSLF, MFDITLILFSGCYILFGLVVW, FLFLCSEMWGALVVSYFFNIF, ISVYNISNAISIFLSAVLTLV, ELGFRILILVLGSTVIGILAL, LLIAISLNVLLYGVTSTLVEA, FANFYNGLEQIIIAISLLVVI, LASLPIVIAMFSLFSVFLIAF, and SVSGILIVIIIAMWYFILKYL.

The protein belongs to the ADP/ATP translocase tlc family.

The protein localises to the mitosome membrane. ATP transporter involved in the uptake of ATP from the parasite cell cytoplasm into the mitosome matrix. Equilibrates nucleotide pools across a concentration gradient between both sides of the mitosome membrane. The protein is ADP,ATP carrier protein 3 (NTT3) of Encephalitozoon cuniculi (strain GB-M1) (Microsporidian parasite).